The following is a 205-amino-acid chain: E3 ubiquitin-protein ligase complex slx8-rfp subunit rfp2 (205 aa).

An RING-type; degenerate zinc finger spans residues 147–190; that stretch reads CAKCGNELVSDEKKSIFAAKCGHLFCSTCAKELRKKTVPCPVQH.

In terms of assembly, part of an E3 ubiquitin complex including rfp1, rfp2 and slx8. Interacts with slx8.

It localises to the nucleus. It catalyses the reaction S-ubiquitinyl-[E2 ubiquitin-conjugating enzyme]-L-cysteine + [acceptor protein]-L-lysine = [E2 ubiquitin-conjugating enzyme]-L-cysteine + N(6)-ubiquitinyl-[acceptor protein]-L-lysine.. The protein operates within protein modification; protein ubiquitination. In terms of biological role, mediates ubiquitination and subsequent desumoylation/degradation of sumoylated proteins and proteins containing SUMO-like domains. Involved in maintaining genome stability where it acts in the cellular response to DNA damage. The polypeptide is E3 ubiquitin-protein ligase complex slx8-rfp subunit rfp2 (rfp2) (Schizosaccharomyces pombe (strain 972 / ATCC 24843) (Fission yeast)).